Consider the following 517-residue polypeptide: Putative transporter C543.05c (517 aa).

11 helical membrane passes run Ser-68–Leu-88, Leu-93–Met-113, Phe-121–Ala-141, Cys-155–Cys-175, Phe-186–Gly-206, Ile-217–Ile-237, Ile-269–Tyr-289, Gly-311–Ile-331, Ser-377–Leu-397, Cys-403–Thr-423, and Arg-449–Val-471.

The protein belongs to the anion exchanger (TC 2.A.31) family.

The protein localises to the vacuole membrane. The protein is Putative transporter C543.05c of Schizosaccharomyces pombe (strain 972 / ATCC 24843) (Fission yeast).